The following is a 595-amino-acid chain: Flap endonuclease 1 (595 aa).

The N-domain stretch occupies residues 1 to 106 (MGIKGLTKFI…SELEKRGEKR (106 aa)). Residue Asp34 coordinates Mg(2+). DNA is bound by residues Arg47 and Arg72. Mg(2+) is bound by residues Asp88, Glu160, Glu162, Asp181, and Asp183. The I-domain stretch occupies residues 124-267 (EIKKQSGRTV…KTAYNLIKEY (144 aa)). A DNA-binding site is contributed by Glu160. Residues Gly245 and Asp247 each contribute to the DNA site. Asp247 provides a ligand contact to Mg(2+). The interaction with PCNA stretch occupies residues 350–358 (TQRRLDNFF). Positions 370–493 (NEESQIKKEV…TGDVYSFPNG (124 aa)) are disordered. Polar residues predominate over residues 392 to 401 (NDSSTKLNSK). Over residues 406–425 (PKGEKESKTEKDDGDTHNGN) the composition is skewed to basic and acidic residues. Residues 426–436 (DNEEEGGEGET) show a composition bias toward acidic residues. Over residues 461–475 (HKSDSESGNVKKEST) the composition is skewed to basic and acidic residues.

It belongs to the XPG/RAD2 endonuclease family. FEN1 subfamily. As to quaternary structure, interacts with PCNA. Three molecules of FEN1 bind to one PCNA trimer with each molecule binding to one PCNA monomer. PCNA stimulates the nuclease activity without altering cleavage specificity. Mg(2+) is required as a cofactor. Phosphorylated. Phosphorylation upon DNA damage induces relocalization to the nuclear plasma.

It is found in the nucleus. The protein localises to the nucleolus. It localises to the nucleoplasm. Its subcellular location is the mitochondrion. Its function is as follows. Structure-specific nuclease with 5'-flap endonuclease and 5'-3' exonuclease activities involved in DNA replication and repair. During DNA replication, cleaves the 5'-overhanging flap structure that is generated by displacement synthesis when DNA polymerase encounters the 5'-end of a downstream Okazaki fragment. It enters the flap from the 5'-end and then tracks to cleave the flap base, leaving a nick for ligation. Also involved in the long patch base excision repair (LP-BER) pathway, by cleaving within the apurinic/apyrimidinic (AP) site-terminated flap. Acts as a genome stabilization factor that prevents flaps from equilibrating into structures that lead to duplications and deletions. Also possesses 5'-3' exonuclease activity on nicked or gapped double-stranded DNA, and exhibits RNase H activity. Also involved in replication and repair of rDNA and in repairing mitochondrial DNA. The polypeptide is Flap endonuclease 1 (Plasmodium knowlesi (strain H)).